Reading from the N-terminus, the 371-residue chain is Forkhead box protein J1.2 (371 aa).

2 disordered regions span residues 45–74 (ANSRPPLPRASQGPCSPPAGDTASCQAPRT) and 80–99 (VAVPTAWASLPTPSPSPVQE). A DNA-binding region (fork-head) is located at residues 109–203 (KPPYSYATLI…VNGVLKRRRM (95 aa)). Residues 228–248 (PSSHHMQHISGGHRQSRRYEK) are disordered.

This sequence belongs to the FOXJ1 family. In terms of tissue distribution, expressed diffusely through much of gastrula and neurula stage embryos. At stage 23 (late neurula), limited to the otic vesicle. By stage 28 (tailbud), also expressed transiently in the presumptive nephrostomes of the pronephros. At stage 35 (early tadpole), expressed broadly in the head and strongly expressed in the developing gill structures.

The protein localises to the nucleus. Key transcription factor required for motile ciliogenesis. Activates genes essential for motile cilia formation and function. The polypeptide is Forkhead box protein J1.2 (Xenopus tropicalis (Western clawed frog)).